Here is a 92-residue protein sequence, read N- to C-terminus: Small ribosomal subunit protein uS19 (92 aa).

The protein belongs to the universal ribosomal protein uS19 family.

Its function is as follows. Protein S19 forms a complex with S13 that binds strongly to the 16S ribosomal RNA. The protein is Small ribosomal subunit protein uS19 of Bartonella henselae (strain ATCC 49882 / DSM 28221 / CCUG 30454 / Houston 1) (Rochalimaea henselae).